A 197-amino-acid chain; its full sequence is ATP-dependent Clp protease proteolytic subunit (197 aa).

Ser98 functions as the Nucleophile in the catalytic mechanism. The active site involves His123.

This sequence belongs to the peptidase S14 family. As to quaternary structure, fourteen ClpP subunits assemble into 2 heptameric rings which stack back to back to give a disk-like structure with a central cavity, resembling the structure of eukaryotic proteasomes.

Its subcellular location is the cytoplasm. It carries out the reaction Hydrolysis of proteins to small peptides in the presence of ATP and magnesium. alpha-casein is the usual test substrate. In the absence of ATP, only oligopeptides shorter than five residues are hydrolyzed (such as succinyl-Leu-Tyr-|-NHMec, and Leu-Tyr-Leu-|-Tyr-Trp, in which cleavage of the -Tyr-|-Leu- and -Tyr-|-Trp bonds also occurs).. In terms of biological role, cleaves peptides in various proteins in a process that requires ATP hydrolysis. Has a chymotrypsin-like activity. Plays a major role in the degradation of misfolded proteins. This Anaplasma phagocytophilum (strain HZ) protein is ATP-dependent Clp protease proteolytic subunit.